The primary structure comprises 165 residues: Protein SprT (165 aa).

In terms of domain architecture, SprT-like spans 20–163 (EKLAQANLKL…RCVHCGEQLV (144 aa)). Position 78 (His-78) interacts with Zn(2+). Glu-79 is a catalytic residue. Position 82 (His-82) interacts with Zn(2+).

The protein belongs to the SprT family. Zn(2+) serves as cofactor.

It localises to the cytoplasm. The chain is Protein SprT from Escherichia coli O127:H6 (strain E2348/69 / EPEC).